The following is a 384-amino-acid chain: 8-amino-7-oxononanoate synthase (384 aa).

Arg-21 contributes to the substrate binding site. 108 to 109 is a pyridoxal 5'-phosphate binding site; the sequence is GF. His-133 contributes to the substrate binding site. Ser-179, His-207, and Thr-233 together coordinate pyridoxal 5'-phosphate. Lys-236 carries the N6-(pyridoxal phosphate)lysine modification. Thr-352 serves as a coordination point for substrate.

The protein belongs to the class-II pyridoxal-phosphate-dependent aminotransferase family. BioF subfamily. As to quaternary structure, homodimer. Requires pyridoxal 5'-phosphate as cofactor.

It carries out the reaction 6-carboxyhexanoyl-[ACP] + L-alanine + H(+) = (8S)-8-amino-7-oxononanoate + holo-[ACP] + CO2. Its pathway is cofactor biosynthesis; biotin biosynthesis. Its function is as follows. Catalyzes the decarboxylative condensation of pimeloyl-[acyl-carrier protein] and L-alanine to produce 8-amino-7-oxononanoate (AON), [acyl-carrier protein], and carbon dioxide. The protein is 8-amino-7-oxononanoate synthase of Shigella flexneri serotype 5b (strain 8401).